A 362-amino-acid polypeptide reads, in one-letter code: Cobalt-precorrin-5B C(1)-methyltransferase (362 aa).

The protein belongs to the CbiD family.

It catalyses the reaction Co-precorrin-5B + S-adenosyl-L-methionine = Co-precorrin-6A + S-adenosyl-L-homocysteine. The protein operates within cofactor biosynthesis; adenosylcobalamin biosynthesis; cob(II)yrinate a,c-diamide from sirohydrochlorin (anaerobic route): step 6/10. Functionally, catalyzes the methylation of C-1 in cobalt-precorrin-5B to form cobalt-precorrin-6A. The chain is Cobalt-precorrin-5B C(1)-methyltransferase from Burkholderia lata (strain ATCC 17760 / DSM 23089 / LMG 22485 / NCIMB 9086 / R18194 / 383).